A 231-amino-acid chain; its full sequence is Ferritin light chain (231 aa).

The N-terminal stretch at 1–19 is a signal peptide; that stretch reads MKMLILAVSCLLAITGSLA. A disulfide bridge links cysteine 23 with cysteine 43. The Ferritin-like diiron domain occupies 50-208; that stretch reads YGSHGNVATE…GHTSDLKKFI (159 aa). Asparagine 134 carries N-linked (GlcNAc...) asparagine glycosylation.

It belongs to the ferritin family. Oligomer of 12 light (L) chains and 12 heavy (H) chains; L and H chains are disulfide-linked. The functional molecule forms a roughly spherical shell with a diameter of 12 nm and contains a central cavity into which the insoluble ferric iron core is deposited.

The protein resides in the golgi apparatus. It localises to the secreted. Its function is as follows. Stores iron in a soluble, non-toxic, readily available form. Important for iron homeostasis. Iron is taken up in the ferrous form and deposited as ferric hydroxides after oxidation. Ferritin is composed of a heavy (H) chain which is responsible for the oxidation and uptake of ferrous iron, and a light (L) chain which facilitates the nucleation of the ferrihydrite iron core. In Trichoplusia ni (Cabbage looper), this protein is Ferritin light chain.